Consider the following 382-residue polypeptide: MKALHFGAGNIGRGFIGKLLADAGIQLTFADVNQVVLDALNARHSYQVHVVGETEQVDTVSGVNAVSSIGDDVVDLIAQVDLVTTAVGPVVLERIAPAIAKGQVKRKEQGNESPLNIIACENMVRGTTQLKGHVMNALPEDAKAWVEEHVGFVDSAVDRIVPPSASATNDPLEVTVETFSEWIVDKTQFKGALPNIPGMELTDNLMAFVERKLFTLNTGHAITAYLGKLAGHQTIRDAILDEKIRAVVKGAMEESGAVLIKRYGFDADKHAAYIQKILGRFENPYLKDDVERVGRQPLRKLSAGDRLIKPLLGTLEYGLPHKNLIEGIAAAMHFRSEDDPQAQELAALIADKGPQAALAQISGLDANSEVVSEAVTAYKAMQ.

Residue 3 to 14 (ALHFGAGNIGRG) participates in NAD(+) binding. Lys269 is modified (N6-acetyllysine).

This sequence belongs to the mannitol dehydrogenase family.

The enzyme catalyses D-mannitol 1-phosphate + NAD(+) = beta-D-fructose 6-phosphate + NADH + H(+). In Escherichia coli (strain K12 / MC4100 / BW2952), this protein is Mannitol-1-phosphate 5-dehydrogenase.